The following is a 274-amino-acid chain: Large ribosomal subunit protein uL2 (274 aa).

Positions Val-220–Phe-265 are disordered. Over residues Pro-227–Ala-239 the composition is skewed to basic and acidic residues. Residues Lys-249 to Asn-262 show a composition bias toward basic residues.

Belongs to the universal ribosomal protein uL2 family. As to quaternary structure, part of the 50S ribosomal subunit. Forms a bridge to the 30S subunit in the 70S ribosome.

Its function is as follows. One of the primary rRNA binding proteins. Required for association of the 30S and 50S subunits to form the 70S ribosome, for tRNA binding and peptide bond formation. It has been suggested to have peptidyltransferase activity; this is somewhat controversial. Makes several contacts with the 16S rRNA in the 70S ribosome. This Chloroflexus aurantiacus (strain ATCC 29364 / DSM 637 / Y-400-fl) protein is Large ribosomal subunit protein uL2.